The sequence spans 687 residues: Pre-mRNA-splicing factor CLF1 (687 aa).

HAT repeat units lie at residues 45–77, 79–111, 113–145, 147–178, 180–211, 213–247, 251–283, 300–332, 337–369, 383–416, 451–483, 525–557, and 629–661; these read EYQR…FEIE, HDMR…AELK, KCIN…VEES, NNVE…FEIR, KNWN…FENR, GNTE…AKLV, AHWE…LKAG, TISY…LISE, QIMQ…LWMR, LEEE…FLIR, KEFD…LEEN, QEFE…YQTS, and LDQE…YIFP.

This sequence belongs to the crooked-neck family. Belongs to the NTC complex (or PRP19-associated complex), composed of at least CEF1, CLF1, ISY1, NTC20, SNT309, SYF1, SYF2, and PRP19. The NTC complex associates with the spliceosome after the release of the U1 and U4 snRNAs and forms the CWC spliceosome subcomplex (or CEF1-associated complex) reminiscent of a late-stage spliceosome composed also of the U2, U5 and U6 snRNAs and at least BUD13, BUD31, BRR2, CDC40, CUS1, CWC2, CWC15, CWC21, CWC22, CWC23, CWC24, CWC25, CWC27, ECM2, HSH155, IST3, LEA1, MSL1, PRP8, PRP9, PRP11, PRP21, PRP22, PRP45, PRP46, SLU7, SMB1, SMD1, SMD2, SMD3, SMX2, SMX3, SNU114, SPP2, RSE1 and YJU2. Interacts with CEF1, ISY1, MUD2, NTC20, PRP22, PRP40, PRP46, SYF1, SYF2, and the ORC2 subunit of the origin recognition complex.

It is found in the nucleus. Involved in pre-mRNA splicing and cell cycle progression. Required for the spliceosome assembly by promoting the functional integration of the U4/U6.U5 tri-snRNP particle into the U1-, U2-dependent pre-spliceosome. Also recruits PRP19 to the spliceosome, as a component of the NTC complex (or PRP19-associated complex). The association of the NTC complex to the spliceosome mediates conformational rearrangement or stabilizes the structure of the spliceosome after U4 snRNA dissociation, which leads to spliceosome maturation. Required for initiation of the DNA replication by binding the RNA replication origins, probably through its interaction with the origin recognition complex (ORC). The protein is Pre-mRNA-splicing factor CLF1 (CLF1) of Saccharomyces cerevisiae (strain ATCC 204508 / S288c) (Baker's yeast).